A 152-amino-acid polypeptide reads, in one-letter code: Em-like protein GEA1 (152 aa).

2 stretches are compositionally biased toward basic and acidic residues: residues 1-17 (MASK…KAKQ) and 32-63 (EAQE…IGHK). The segment at 1 to 63 (MASKQLSREE…HEGYQEIGHK (63 aa)) is disordered. 4 tandem repeats follow at residues 44 to 63 (GGQT…IGHK), 64 to 83 (GGEA…MGHK), 84 to 103 (GGEA…MGHK), and 104 to 123 (GGEA…MGRK). The tract at residues 44 to 123 (GGQTRKEQLG…HEGYKEMGRK (80 aa)) is 4 X 20 AA tandem repeats. Positions 116–152 (GYKEMGRKGGLSTMEKSGGERAEEEGIEIDESKFTNK) are disordered.

Belongs to the small hydrophilic plant seed protein family. In terms of tissue distribution, in seeds only. Specifically located to vascular bundles in the cotyledon and axis of the dry seed. Also found in the epiderm and outer layers of the cortex in the embryo axis.

It is thought to provide protection for the cytoplasm during the desiccation stage of embryo development. The sequence is that of Em-like protein GEA1 (EM1) from Arabidopsis thaliana (Mouse-ear cress).